A 310-amino-acid polypeptide reads, in one-letter code: D-alanine--D-alanine ligase (310 aa).

In terms of domain architecture, ATP-grasp spans 105-301; that stretch reads KQAFVSAGIL…FEELVERIIL (197 aa). 133 to 186 serves as a coordination point for ATP; sequence SFGLPLVVKPVQEGSSVGISIVKEESQLAAAVKLAFRHDDEILVEQFIKGQEVQ. 3 residues coordinate Mg(2+): D254, E267, and N269.

The protein belongs to the D-alanine--D-alanine ligase family. It depends on Mg(2+) as a cofactor. Mn(2+) is required as a cofactor.

The protein resides in the cytoplasm. The catalysed reaction is 2 D-alanine + ATP = D-alanyl-D-alanine + ADP + phosphate + H(+). It functions in the pathway cell wall biogenesis; peptidoglycan biosynthesis. Functionally, cell wall formation. The polypeptide is D-alanine--D-alanine ligase (Pelobacter propionicus (strain DSM 2379 / NBRC 103807 / OttBd1)).